Reading from the N-terminus, the 147-residue chain is uncharacterized protein (147 aa).

The HTH LytTR-type domain maps to 44 to 147 (LVGYIDKEIH…LKSIKERLSI (104 aa)).

It localises to the cytoplasm. This is an uncharacterized protein from Staphylococcus aureus (strain Mu50 / ATCC 700699).